We begin with the raw amino-acid sequence, 525 residues long: Neutrophil cytosol factor 2 (525 aa).

TPR repeat units follow at residues 37 to 70 (SRICFNIGCVNTILENLQAAEQAFTKSINRDKHS), 71 to 104 (AVAYFQRGMLYYRMEKYDLAIKDLKEALTQLRGN), and 121 to 154 (CEVLYNIALMHAKKEEWKKAEEQLALATNMKSEP). The residue at position 233 (threonine 233) is a Phosphothreonine. One can recognise an SH3 1 domain in the interval 240 to 299 (LEGEAHRVLFGFVPETPEELQVMPGNIVFVLKKGSDNWATVMFNGQKGLVPCNYLEPVEL). Residues 304–343 (QSQPQEDTSPESDIPPPPNSSPPGRLQLSPGHKQKEPKEL) are disordered. Residues serine 324 and serine 398 each carry the phosphoserine modification. The PB1 domain maps to 350-428 (PYMLKVHYKY…YCLTLWCEHT (79 aa)). Residues 437 to 457 (EPIQRENSDASKQTTEPQPKE) are disordered. An SH3 2 domain is found at 456–515 (KEGTQVVAIFSYEAAQPEDLEFVEGDVILVLSHVNEEWLEGECKGKVGIFPKAFVEGCAA).

The protein belongs to the NCF2/NOXA1 family. In terms of assembly, component of the phagocyte NADPH oxidase complex composed of an obligatory core heterodimer formed by the membrane proteins CYBA and CYBB and the cytosolic regulatory subunits NCF1/p47-phox, NCF2/p67-phox, NCF4/p40-phox and the small GTPase RAC1 or RAC2. Part of a cytosolic complex composed at least by NCF1, NCF2 and NCF4. Interacts with NCF4. Interacts (via the C-terminal SH3 domain) with NCF1 (via C-terminus). Interacts with SYTL1 and RAC1. May interact with NOXO1. Interacts with S100A8 and calprotectin (S100A8/9). Interacts with GBP7 (via GB1/RHD3-type G domain). Interacts with CYBB; the interaction is enhanced in the presence of GBP7.

Its subcellular location is the cytoplasm. Its function is as follows. NCF2, NCF1, and a membrane bound cytochrome b558 are required for activation of the latent NADPH oxidase (necessary for superoxide production). Subunit of the phagocyte NADPH oxidase complex that mediates the transfer of electrons from cytosolic NADPH to O2 to produce the superoxide anion (O2(-)). In the activated complex, electrons are first transferred from NADPH to flavin adenine dinucleotide (FAD) and subsequently transferred via two heme molecules to molecular oxygen, producing superoxide through an outer-sphere reaction. Activation of the NADPH oxidase complex is initiated by the assembly of cytosolic subunits of the NADPH oxidase complex with the core NADPH oxidase complex to form a complex at the plasma membrane or phagosomal membrane. This activation process is initiated by phosphorylation dependent binding of the cytosolic NCF1/p47-phox subunit to the C-terminus of CYBA/p22-phox. The protein is Neutrophil cytosol factor 2 of Mus musculus (Mouse).